The chain runs to 89 residues: Small ribosomal subunit protein uS15 (89 aa).

This sequence belongs to the universal ribosomal protein uS15 family. Part of the 30S ribosomal subunit. Forms a bridge to the 50S subunit in the 70S ribosome, contacting the 23S rRNA.

Its function is as follows. One of the primary rRNA binding proteins, it binds directly to 16S rRNA where it helps nucleate assembly of the platform of the 30S subunit by binding and bridging several RNA helices of the 16S rRNA. Functionally, forms an intersubunit bridge (bridge B4) with the 23S rRNA of the 50S subunit in the ribosome. The chain is Small ribosomal subunit protein uS15 from Lactococcus lactis subsp. lactis (strain IL1403) (Streptococcus lactis).